A 688-amino-acid chain; its full sequence is Zinc finger and BTB domain-containing protein 48 (688 aa).

The region spanning 26 to 89 (CDATLDVGGL…FYTGHLALTS (64 aa)) is the BTB domain. Positions 119-140 (SVGQAAGGQSGLGPPASQNVNS) are disordered. K143 participates in a covalent cross-link: Glycyl lysine isopeptide (Lys-Gly) (interchain with G-Cter in SUMO2). The interval 161 to 192 (PRDQEPRGSHSPQRPQLHSPAQSEGPSSLCGK) is disordered. Residues S169, S171, and S179 each carry the phosphoserine modification. A compositionally biased stretch (polar residues) spans 170 to 186 (HSPQRPQLHSPAQSEGP). K263 participates in a covalent cross-link: Glycyl lysine isopeptide (Lys-Gly) (interchain with G-Cter in SUMO2). The C2H2-type 1 zinc-finger motif lies at 291-313 (VECPTCHKKFLSKYYLKVHNRKH). Zn(2+)-binding residues include C293, C296, H309, H313, C321, C324, H337, C342, C352, C355, H368, H372, C380, C383, H396, and H401. Residues 319–344 (FECPKCGKCYFRKENLLEHEARNCMN) form a CCHC-type zinc finger. 9 C2H2-type zinc fingers span residues 350 to 372 (FTCS…MVSH), 378 to 401 (YKCS…IKLH), 407 to 430 (HACP…AFKH), 436 to 459 (FVCE…KAKH), 465 to 487 (HVCE…LRTH), 493 to 515 (FQCH…NRTH), 521 to 544 (FSCE…ASRH), 550 to 572 (HFCQ…VRRH), and 578 to 600 (FECT…MEIH). The Zn(2+) site is built by C552, C555, H568, C580, C583, H596, and H600.

The protein belongs to the krueppel C2H2-type zinc-finger protein family. In terms of assembly, interacts with EP300. As to expression, detected in adrenal gland and neuroblastoma.

It is found in the nucleus. It localises to the chromosome. Its subcellular location is the telomere. Its function is as follows. Plays a critical role in transcriptional regulation and chromatin remodeling. Acts as a regulator of telomere length. Directly binds the telomeric double-stranded 5'-TTAGGG-3' repeat. Preferentially binds to telomeres that have a low concentration of shelterin complex and acts as a regulator of telomere length by initiating telomere trimming, a process that prevents the accumulation of aberrantly long telomeres. Also acts as a transcription regulator that binds to promoter regions. Regulates expression of a small subset of genes, including MTFP1. Acts as a negative regulator of cell proliferation by specifically activating expression of ARF, a tumor suppressor isoform of CDKN2A. Acts as a transcription regulator of CIITA, the major factor regulating MHC class II gene expression. In addition, regulates cellular m6A/m6Am methylation on RNA by facilitating the recruitment of the RNA demethylase, FTO, to target mRNAs. The chain is Zinc finger and BTB domain-containing protein 48 from Homo sapiens (Human).